The chain runs to 233 residues: Large ribosomal subunit protein uL1 (233 aa).

This sequence belongs to the universal ribosomal protein uL1 family. As to quaternary structure, part of the 50S ribosomal subunit.

Binds directly to 23S rRNA. The L1 stalk is quite mobile in the ribosome, and is involved in E site tRNA release. Functionally, protein L1 is also a translational repressor protein, it controls the translation of the L11 operon by binding to its mRNA. The chain is Large ribosomal subunit protein uL1 from Geotalea uraniireducens (strain Rf4) (Geobacter uraniireducens).